The following is a 37-amino-acid chain: Conotoxin Bt1.8 (37 aa).

Residues proline 1–lysine 20 constitute a propeptide that is removed on maturation. Disulfide bonds link cysteine 22-cysteine 28 and cysteine 23-cysteine 36. Residue cysteine 36 is modified to Cysteine amide.

This sequence belongs to the conotoxin A superfamily. Expressed by the venom duct.

It localises to the secreted. Alpha-conotoxins bind to the nicotinic acetylcholine receptors (nAChR) and inhibit them. This toxin inhibits mammalian alpha-3-beta-2/CHRNA3-CHRNB2 nAChR (IC(50)=9.4 nM (rat), IC(50)=8.8 nM (human)), as well as the subunit chimera alpha-6/alpha-3-beta-2-beta-3 nAChR (CHRNA6/CHRNA3-CHRNB2-CHRNB3)(IC(50)=2.1 nM (rat), IC(50)=1.7 nM (human)). Binds to rat alpha-6/alpha-3-beta-2-beta-3 more rapidly than to alpha-3-beta-2, and dissociates more rapidly from alpha-3-beta-2 than from alpha-6/alpha-3-beta-2-beta-3. The protein is Conotoxin Bt1.8 of Conus betulinus (Beech cone).